The chain runs to 520 residues: MRNKKILKEDELLSETQQAAFHQIAMEPFEINVPKPKRRNGVNFSLAVVVIYLILLTAGAGLLVVQVLNLQARLRVLEMYFLNDTLAAEDSPSFSLLQSAHPGEHLAQGASRLQVLQAQLTWVRVSHEHLLQRVDNFTQNPGMFRIKGEQGAPGLQGHKGAMGMPGAPGPPGPPAEKGAKGAMGRDGATGPSGPQGPPGVKGEAGLQGPQGAPGKQGATGTPGPQGEKGSKGDGGLIGPKGETGTKGEKGDLGLPGSKGDRGMKGDAGVMGPPGAQGSKGDFGRPGPPGLAGFPGAKGDQGQPGLQGVPGPPGAVGHPGAKGEPGSAGSPGRAGLPGSPGSPGATGLKGSKGDTGLQGQQGRKGESGVPGPAGVKGEQGSPGLAGPKGAPGQAGQKGDQGVKGSSGEQGVKGEKGERGENSVSVRIVGSSNRGRAEVYYSGTWGTICDDEWQNSDAIVFCRMLGYSKGRALYKVGAGTGQIWLDNVQCRGTESTLWSCTKNSWGHHDCSHEEDAGVECSV.

Over 1 to 43 the chain is Cytoplasmic; it reads MRNKKILKEDELLSETQQAAFHQIAMEPFEINVPKPKRRNGVN. The helical; Signal-anchor for type II membrane protein transmembrane segment at 44–64 threads the bilayer; sequence FSLAVVVIYLILLTAGAGLLV. At 65–520 the chain is on the extracellular side; it reads VQVLNLQARL…EEDAGVECSV (456 aa). Asparagine 83 and asparagine 136 each carry an N-linked (GlcNAc...) asparagine glycan. The disordered stretch occupies residues 142-423; that stretch reads GMFRIKGEQG…KGERGENSVS (282 aa). One can recognise a Collagen-like domain in the interval 147–419; sequence KGEQGAPGLQ…VKGEKGERGE (273 aa). Composition is skewed to low complexity over residues 203–227, 290–345, and 380–398; these read EAGL…PQGE, LAGF…PGAT, and SPGL…QKGD. Basic and acidic residues predominate over residues 410-419; it reads VKGEKGERGE. Residues 424–519 enclose the SRCR domain; it reads VRIVGSSNRG…HEEDAGVECS (96 aa). 3 cysteine pairs are disulfide-bonded: cysteine 447–cysteine 508, cysteine 460–cysteine 518, and cysteine 488–cysteine 498.

In terms of assembly, homotrimer; disulfide-linked. Trimers may assemble in larger oligomers thus resulting in the creation of a large surface capable of interacting with very large ligands. In terms of processing, N-glycosylated. As to expression, expressed in alveolar macrophages (at protein level). Detected in macrophages from various tissues including thymus, kidney, Kupffer cells of liver, and spleen.

Its subcellular location is the cell membrane. Its function is as follows. Pattern recognition receptor (PRR) which binds Gram-positive and Gram-negative bacteria. Also plays a role in binding of unopsonized particles by alveolar macrophages. Binds to the secretoglobin SCGB3A2. This chain is Macrophage receptor MARCO (MARCO), found in Homo sapiens (Human).